Here is a 503-residue protein sequence, read N- to C-terminus: D-xylose-proton symporter-like 2 (503 aa).

Over residues 1-15 (MALDPEQQQPISSVS) the composition is skewed to polar residues. The segment at 1 to 32 (MALDPEQQQPISSVSREFGKSSGEISPEREPL) is disordered. A2 carries the N-acetylalanine modification. Residue S26 is modified to Phosphoserine. 12 consecutive transmembrane segments (helical) span residues 42 to 62 (YSVV…LLYG), 99 to 119 (GSLY…DVIG), 124 to 144 (LILA…APTY), 146 to 166 (VLII…HAAP), 187 to 207 (FFIV…VNVH), 213 to 233 (MYAT…WLPA), 305 to 325 (ALII…PSVL), 346 to 366 (VSIL…VVID), 375 to 395 (LGGV…YLFF), 400 to 420 (VVAV…FGPI), 437 to 457 (GLSL…FAFS), and 467 to 487 (ILFC…FFIV).

The protein belongs to the major facilitator superfamily. Sugar transporter (TC 2.A.1.1) family.

The protein localises to the membrane. The sequence is that of D-xylose-proton symporter-like 2 from Arabidopsis thaliana (Mouse-ear cress).